A 375-amino-acid polypeptide reads, in one-letter code: Actin (375 aa).

The protein belongs to the actin family.

It localises to the cytoplasm. The protein resides in the cytoskeleton. It carries out the reaction ATP + H2O = ADP + phosphate + H(+). Its function is as follows. Actins are highly conserved proteins that are involved in various types of cell motility and are ubiquitously expressed in all eukaryotic cells. In Giardia intestinalis (Giardia lamblia), this protein is Actin.